A 262-amino-acid polypeptide reads, in one-letter code: Transcription factor Spi-B (262 aa).

The tract at residues 1-31 is TAD1 (Acidic); it reads MLALEAAQLDGPHFSCLYPDGVFYDLDSCKH. Residues 41 to 61 form a TAD2 region; that stretch reads PDSLWDWTVAPPVPATPYEAF. Residues 140 to 163 form a disordered region; it reads ALEVSDSESDEALVAGPEGKGSEA. The ETS DNA-binding region spans 169 to 252; that stretch reads LRLYQFLLGL…VKRKLTYQFD (84 aa).

This sequence belongs to the ETS family. In terms of assembly, can form homotypic interactions. Interacts with IRF4/Pip. Interacts with JUN. Interacts with TBP. May also interact with CREBBP and EP300. Interacts with NONO/p54(nrb). Expressed in plasmacytoid dendritic cells (pDCs) and B-cells, not expressed in T-cells or granulocytes. May also be enriched in stem cell populations of the liver.

The protein resides in the nucleus. Its subcellular location is the cytoplasm. In terms of biological role, sequence specific transcriptional activator which binds to the PU-box, a purine-rich DNA sequence (5'-GAGGAA-3') that can act as a lymphoid-specific enhancer. Promotes development of plasmacytoid dendritic cells (pDCs), also known as type 2 DC precursors (pre-DC2) or natural interferon (IFN)-producing cells. These cells have the capacity to produce large amounts of interferon and block viral replication. May be required for B-cell receptor (BCR) signaling, which is necessary for normal B-cell development and antigenic stimulation. This is Transcription factor Spi-B (SPIB) from Homo sapiens (Human).